The chain runs to 505 residues: Glucan endo-1,3-beta-glucosidase 2 (505 aa).

The signal sequence occupies residues 1 to 20; sequence MASLLHLLLLSLSLLVLASA. A glycan (N-linked (GlcNAc...) asparagine) is linked at Asn97. Catalysis depends on Glu125, which acts as the Proton donor. 2 N-linked (GlcNAc...) asparagine glycosylation sites follow: Asn180 and Asn262. Glu272 (nucleophile) is an active-site residue. Residues Asn304, Asn361, and Asn365 are each glycosylated (N-linked (GlcNAc...) asparagine). Cys369 and Cys432 are oxidised to a cystine. Asn461, Asn466, and Asn473 each carry an N-linked (GlcNAc...) asparagine glycan. A lipid anchor (GPI-anchor amidated serine) is attached at Ser477. The propeptide at 478–505 is removed in mature form; that stretch reads SGIRSDLYYSRGIWSILTVMILNVANIL.

The protein belongs to the glycosyl hydrolase 17 family. Contains two additional disulfide bonds.

Its subcellular location is the cell membrane. The enzyme catalyses Hydrolysis of (1-&gt;3)-beta-D-glucosidic linkages in (1-&gt;3)-beta-D-glucans.. The sequence is that of Glucan endo-1,3-beta-glucosidase 2 from Arabidopsis thaliana (Mouse-ear cress).